We begin with the raw amino-acid sequence, 588 residues long: Ufm1-specific protease (588 aa).

Active-site residues include Cys420, Asp544, and His546.

It belongs to the peptidase C78 family. As to quaternary structure, interacts with odr-4.

The protein resides in the endoplasmic reticulum membrane. The protein localises to the cytoplasm. It localises to the perinuclear region. Thiol protease which recognizes and hydrolyzes the peptide bond at the C-terminal Gly of ufm-1, a ubiquitin-like modifier protein bound to a number of target proteins. Required, with oct-4, for the localization of a subset of 7 transmembrane domain odorant receptors, including odr-10, to the cilia of olfactory neurons AWA and AWC. Operates in aggregation behavior, and responses to oxygen levels. This chain is Ufm1-specific protease, found in Caenorhabditis briggsae.